The sequence spans 172 residues: Centrin-1 (172 aa).

The disordered stretch occupies residues 1–31 (MASGFKKPSAASTGQKRKVAPKPELTEDQKQ). EF-hand domains are found at residues 28–63 (DQKQEVREAFDLFDVDGSGTIDAKELKVAMRALGFE), 64–99 (PRKEEMKKMISEVDREGTGKISFNDFLAVMTQKMSE), 101–136 (DTKEEILKAFRLFDDDETGKISFKNLKRVANELGEN), and 137–172 (LTDEELQEMIDEADRDGDGEVNEEEFLRIMKKTSLY). Asp-41, Asp-43, Ser-45, Thr-47, and Glu-52 together coordinate Ca(2+). The Ca(2+) site is built by Asp-150, Asp-152, Asp-154, Glu-156, and Glu-161.

The protein belongs to the centrin family. Monomer. Interacts with CIMAP3. Interacts with USP49.

The protein localises to the cytoplasm. The protein resides in the cytoskeleton. Its subcellular location is the microtubule organizing center. It is found in the centrosome. It localises to the cell projection. The protein localises to the cilium. Plays a fundamental role in microtubule-organizing center structure and function. Plays a role in sperm cilia formation. In Homo sapiens (Human), this protein is Centrin-1.